Consider the following 475-residue polypeptide: MSPKTETKAYVGFKAGVKDYKLTYYTPEYETKDTDILAAFRVTPQPGVPPEEAGAAVAAESSTGTWTSVWTDGLTSLDRYKGRCYDIEPVAGEENQYICYVAYPLDLFEEGSVTNMFTSIVGNVFGFKALRALRLEDLRIPPAYSKTFQGPPHGIQVERDKLNKYGRPLLGCTIKPKLGLSAKNYGRAVYECLRGGLDFTKDDENVNSQPFMRWRDRFLFCAEALFKAQTETGEIKGHYLNATAGTCEEMIKRAVFARELGVPIVMHDYLTGGFTANTSLAHYCRDNGLLLHIHRAMHAVIDRQKNHGMHFRVLAKALRMSGGDHVHSGTVVGKLEGERDITLGFVDLLRDDFIEKDRSRGIYFTQDWVSMPGVLPVASGGIHVWHMPALTEIFGDDSVLQFGGGTLGHPWGNAPGAVANRVALEACVQARNEGRDLAREGNEIIREAAKWSPELAAACEVWKEIKFEFAAMDTL.

Positions 1 to 2 (MS) are excised as a propeptide. The residue at position 3 (Pro3) is an N-acetylproline. An N6,N6,N6-trimethyllysine modification is found at Lys14. Substrate is bound by residues Asn123 and Thr173. Lys175 acts as the Proton acceptor in catalysis. Lys177 contributes to the substrate binding site. Mg(2+) contacts are provided by Lys201, Asp203, and Glu204. An N6-carboxylysine modification is found at Lys201. The Proton acceptor role is filled by His294. 3 residues coordinate substrate: Arg295, His327, and Ser379.

This sequence belongs to the RuBisCO large chain family. Type I subfamily. In terms of assembly, heterohexadecamer of 8 large chains and 8 small chains; disulfide-linked. The disulfide link is formed within the large subunit homodimers. Mg(2+) is required as a cofactor. Post-translationally, the disulfide bond which can form in the large chain dimeric partners within the hexadecamer appears to be associated with oxidative stress and protein turnover.

Its subcellular location is the plastid. It localises to the chloroplast. The enzyme catalyses 2 (2R)-3-phosphoglycerate + 2 H(+) = D-ribulose 1,5-bisphosphate + CO2 + H2O. The catalysed reaction is D-ribulose 1,5-bisphosphate + O2 = 2-phosphoglycolate + (2R)-3-phosphoglycerate + 2 H(+). In terms of biological role, ruBisCO catalyzes two reactions: the carboxylation of D-ribulose 1,5-bisphosphate, the primary event in carbon dioxide fixation, as well as the oxidative fragmentation of the pentose substrate in the photorespiration process. Both reactions occur simultaneously and in competition at the same active site. The polypeptide is Ribulose bisphosphate carboxylase large chain (Piper cenocladum (Ant piper)).